Consider the following 348-residue polypeptide: 2-heptyl-4(1H)-quinolone synthase subunit PqsC (348 aa).

Catalysis depends on C129, which acts as the Acyl-thioester intermediate. The active site involves H269.

The protein belongs to the thiolase-like superfamily. FabH family. As to quaternary structure, forms a tight complex with PqsB.

The protein resides in the cytoplasm. It carries out the reaction (2-aminobenzoyl)acetate + octanoyl-CoA + H(+) = 2-heptyl-4(1H)-quinolone + CO2 + CoA + H2O. With respect to regulation, folding of PqsC and binding of octanoate are promoted by PqsB. Binding of the octanoyl group probably increases the binding affinity of the complex for 2-ABA. Activity of the complex is inhibited by 2-aminoacetophenone (2-AA). Required for the biosynthesis of the quorum-sensing signaling molecules 2-heptyl-4(1H)-quinolone (HHQ) and 2-heptyl-3-hydroxy-4(1H)-quinolone (Pseudomonas quinolone signal or PQS), which are important for biofilm formation and virulence. The PqsC/PqsB complex catalyzes the condensation of 2-aminobenzoylacetate (2-ABA) and octanoyl-CoA to form HHQ. First, PqsC acquires an octanoyl group from octanoyl-CoA and forms an octanoyl-PqsC intermediate. Then, together with PqsB, it catalyzes the coupling of 2-ABA with the octanoate group, leading to decarboxylation and dehydration, and resulting in closure of the quinoline ring. This chain is 2-heptyl-4(1H)-quinolone synthase subunit PqsC, found in Pseudomonas aeruginosa (strain ATCC 15692 / DSM 22644 / CIP 104116 / JCM 14847 / LMG 12228 / 1C / PRS 101 / PAO1).